A 107-amino-acid polypeptide reads, in one-letter code: Glutaconyl-CoA decarboxylase subunit delta (107 aa).

Residues 10 to 32 traverse the membrane as a helical segment; sequence MINMTIVFGVLIVLGILMVLIHA. A disordered region spans residues 37–60; that stretch reads KKVQGKKKPVVAKPAPSAAASKRQ. Low complexity predominate over residues 47 to 57; the sequence is VAKPAPSAAAS.

It belongs to the OadG family. Heterooctamer consisting of two alpha, two beta, two gamma and two delta subunits.

Its subcellular location is the cell membrane. It catalyses the reaction (2E)-glutaconyl-CoA + Na(+)(in) + H(+) = (2E)-butenoyl-CoA + Na(+)(out) + CO2. Its pathway is amino-acid degradation; L-glutamate degradation via hydroxyglutarate pathway; crotonoyl-CoA from L-glutamate: step 5/5. Part of the primary sodium pump glutaconyl-CoA decarboxylase (GCD). Possible membrane anchor for the alpha subunit. The chain is Glutaconyl-CoA decarboxylase subunit delta (gcdD) from Acidaminococcus fermentans (strain ATCC 25085 / DSM 20731 / CCUG 9996 / CIP 106432 / VR4).